The primary structure comprises 688 residues: G protein-coupled receptor kinase 3 (688 aa).

The interval 1 to 190 is N-terminal; it reads MADLEAVLAD…ELNIHLSMND (190 aa). The 122-residue stretch at 54–175 folds into the RGS domain; that stretch reads TFDKIFNQKI…MESDKFTRFC (122 aa). In terms of domain architecture, Protein kinase spans 191 to 453; the sequence is FSVHRIIGRG…ARELKEHIFF (263 aa). ATP-binding positions include 197-205 and Lys220; that span reads IGRGGFGEV. The Proton acceptor role is filled by Asp317. The 68-residue stretch at 454 to 521 folds into the AGC-kinase C-terminal domain; it reads KGIDWQHVYL…VISERWQQEV (68 aa). The PH domain maps to 558-652; the sequence is DCIMHGYMLK…WLKELTCTFN (95 aa).

This sequence belongs to the protein kinase superfamily. AGC Ser/Thr protein kinase family. GPRK subfamily. As to quaternary structure, interacts with GIT1. In terms of processing, ubiquitinated.

The protein localises to the postsynapse. Its subcellular location is the presynapse. It carries out the reaction [beta-adrenergic receptor] + ATP = [beta-adrenergic receptor]-phosphate + ADP + H(+). In terms of biological role, specifically phosphorylates the agonist-occupied form of the beta-adrenergic and closely related receptors. This is G protein-coupled receptor kinase 3 from Mus musculus (Mouse).